A 615-amino-acid chain; its full sequence is DNA mismatch repair protein MutL (615 aa).

The tract at residues histidine 362–tyrosine 397 is disordered. The segment covering alanine 373–alanine 387 has biased composition (low complexity).

This sequence belongs to the DNA mismatch repair MutL/HexB family.

Its function is as follows. This protein is involved in the repair of mismatches in DNA. It is required for dam-dependent methyl-directed DNA mismatch repair. May act as a 'molecular matchmaker', a protein that promotes the formation of a stable complex between two or more DNA-binding proteins in an ATP-dependent manner without itself being part of a final effector complex. The sequence is that of DNA mismatch repair protein MutL from Escherichia coli O81 (strain ED1a).